A 374-amino-acid chain; its full sequence is Cell wall integrity and stress response component 1 (374 aa).

The N-terminal stretch at 1–29 (MVFLNSSPFKGRLLFFVYLLIISTRLVAA) is a signal peptide. Residues 30–292 (DMNTQYGCYL…SNHTSLNAGA (263 aa)) are Extracellular-facing. A WSC domain is found at 31 to 119 (MNTQYGCYLV…DLYWSVYLTG (89 aa)). The tract at residues 132–236 (VSSTTSSSSS…SSSSSSRPSS (105 aa)) is disordered. N-linked (GlcNAc...) asparagine glycans are attached at residues asparagine 278 and asparagine 284. Residues 293 to 313 (IVGIVIGCVAFAVVMALCIFL) form a helical membrane-spanning segment. Topologically, residues 314 to 374 (YFYFRRFKIR…RKILRVTNLN (61 aa)) are cytoplasmic. Phosphoserine is present on serine 354.

In terms of processing, O-mannosylated.

It is found in the membrane. The polypeptide is Cell wall integrity and stress response component 1 (wsc1) (Schizosaccharomyces pombe (strain 972 / ATCC 24843) (Fission yeast)).